Here is a 693-residue protein sequence, read N- to C-terminus: F-box protein MAX2 (693 aa).

Residues Ser-3–Ile-50 enclose the F-box domain. LRR repeat units lie at residues Leu-9 to Ser-34, Thr-49 to Phe-74, Leu-75 to Phe-100, Val-110 to Arg-135, Ser-141 to Asn-167, Phe-168 to Thr-196, Thr-200 to Cys-225, Phe-232 to Asp-257, Asp-274 to Val-299, Asp-302 to Gln-327, Cys-332 to Asn-356, Ser-357 to Gly-382, Cys-383 to Cys-409, and Cys-410 to Cys-436. Residues Glu-445 to Glu-465 are disordered. LRR repeat units follow at residues Cys-480–Ile-505, Gly-508–Ile-532, Arg-541–Cys-565, and Asp-608–Gly-637.

As to quaternary structure, part of a SCF (SKP1-cullin-F-box) protein ligase complex. Interacts with SKP1A/ASK1. Interacts with CUL1. Interacts with SMXL6, SMXL7 and SMXL8. Interacts with D14. Forms a complex with D14 and SKP1A/ASK1 in presence of strigolactone. In terms of tissue distribution, expressed in the vasculature of growing leaves and roots, rosette axillary bud, flowers, siliques, funiculi and stems.

Its subcellular location is the nucleus. It participates in protein modification; protein ubiquitination. In terms of biological role, component of SCF(ASK-cullin-F-box) E3 ubiquitin ligase complexes, which may mediate the ubiquitination and subsequent proteasomal degradation of target proteins. Promotes the senescence. Is necessary for responses to strigolactones and karrikins. Contributes to the selective repression of axillary shoots and moderates the branching by regulating negatively the auxin transport in primary stems, in an AXR1-independent manner. Required for the progression of leaf senescence mediated by methyl jasmonate. Required at each node to suppress axillary bud growth. The sequence is that of F-box protein MAX2 from Arabidopsis thaliana (Mouse-ear cress).